Consider the following 845-residue polypeptide: Ribosome-releasing factor 2, mitochondrial (845 aa).

The N-terminal 28 residues, Met-1–Leu-28, are a transit peptide targeting the mitochondrion. The region spanning Asp-38–Leu-330 is the tr-type G domain. GTP-binding positions include Ala-47 to Thr-54, Asp-111 to His-115, and Asn-165 to Asp-168.

This sequence belongs to the TRAFAC class translation factor GTPase superfamily. Classic translation factor GTPase family. EF-G/EF-2 subfamily.

It localises to the mitochondrion. Its function is as follows. Mitochondrial GTPase that mediates the disassembly of ribosomes from messenger RNA at the termination of mitochondrial protein biosynthesis. Not involved in the GTP-dependent ribosomal translocation step during translation elongation. This is Ribosome-releasing factor 2, mitochondrial from Scheffersomyces stipitis (strain ATCC 58785 / CBS 6054 / NBRC 10063 / NRRL Y-11545) (Yeast).